Reading from the N-terminus, the 364-residue chain is Transcription factor TGA4 (364 aa).

Positions 39–79 are disordered; the sequence is PGSIIIPTNEKPDSLSEDTSHGTEGTPHKFDQEASTSRHPD. The segment covering 48 to 79 has biased composition (basic and acidic residues); it reads EKPDSLSEDTSHGTEGTPHKFDQEASTSRHPD. Residues 78–141 form the bZIP domain; that stretch reads PDKIQRRLAQ…NGVDTNALSF (64 aa). Coiled coils occupy residues 79-127 and 257-277; these read DKIQ…RQQG and NLRQSCQQAEDALSQGMEKLQ. A basic motif region spans residues 80–100; sequence KIQRRLAQNREAARKSRLRKK. The tract at residues 106 to 120 is leucine-zipper; sequence LETSRLKLIHLEQEL. The region spanning 149 to 359 is the DOG1 domain; it reads IVAFEMEYGH…RALSSSWAAR (211 aa). Cysteine 256 and cysteine 262 are oxidised to a cystine.

The protein belongs to the bZIP family. As to quaternary structure, binds DNA as a dimer. Interaction with the Dof domain proteins OBP1, OBP2 or OBP3 enhances the binding to the ocs element. Interacts with RAP2-3/EPB, an ethylene-responsive element binding protein. The reduced form interacts with NPR1. In terms of tissue distribution, predominantly expressed in roots.

Its subcellular location is the nucleus. Transcriptional activator that binds specifically to the DNA sequence 5'-TGACG-3'. Recognizes ocs elements like the as-1 motif of the cauliflower mosaic virus 35S promoter. Binding to the as-1-like cis elements mediate auxin- and salicylic acid-inducible transcription. May be involved in the induction of the systemic acquired resistance (SAR) via its interaction with NPR1. Could also bind to the Hex-motif (5'-TGACGTGG-3') another cis-acting element found in plant histone promoters. This chain is Transcription factor TGA4 (TGA4), found in Arabidopsis thaliana (Mouse-ear cress).